Here is a 225-residue protein sequence, read N- to C-terminus: MKIVVAIGGSILLKEYDCKKFQEYSEILKSLASEHEIFVVVGGGKPAREYIGVVRELGAGEAQCDDIGIEVTRINAKLLLSALGDAAYQKVPHNFQEALEYSATGKIIVMGGTEPAHSTDAVSAILAEYIHADKLINLTSVDGMYDKDPNKYEDAKLIKEITASEMIEFISGKDTKAGTYEFFDMTAIQMIKRSSLETVIANGYDSENLIKAINGEEVGTKVISK.

ATP is bound at residue 9 to 10 (GS). G43 provides a ligand contact to UMP. Positions 44 and 48 each coordinate ATP. UMP-binding positions include D65 and 113–119 (TEPAHST). ATP-binding residues include T139, Y145, and D148.

Belongs to the UMP kinase family. Homohexamer.

It is found in the cytoplasm. The catalysed reaction is UMP + ATP = UDP + ADP. It functions in the pathway pyrimidine metabolism; CTP biosynthesis via de novo pathway; UDP from UMP (UMPK route): step 1/1. Its activity is regulated as follows. Inhibited by UTP. Functionally, catalyzes the reversible phosphorylation of UMP to UDP. In Methanobrevibacter smithii (strain ATCC 35061 / DSM 861 / OCM 144 / PS), this protein is Uridylate kinase.